Here is a 254-residue protein sequence, read N- to C-terminus: Inner membrane protein YabI (254 aa).

The Periplasmic portion of the chain corresponds to 1–7 (MQALLEH). The next 2 helical transmembrane spans lie at 8–28 (FITQSTVYSLMAVVLVAFLES) and 29–49 (LALVGLILPGTVLMAGLGALI). The Periplasmic portion of the chain corresponds to 50–58 (GSGELSFWH). A helical membrane pass occupies residues 59–79 (AWLAGIIGCLMGDWISFWLGW). The Cytoplasmic portion of the chain corresponds to 80–144 (RFKKPLHRWS…LPVAKFITPN (65 aa)). A helical membrane pass occupies residues 145 to 165 (IIGCLLWPPFYFLPGILAGAA). Residues 166–178 (IDIPAGMQSGEFK) are Periplasmic-facing. A helical membrane pass occupies residues 179–199 (WLLLATAVFLWVGGWLCWRLW). Residues 200–215 (RSGKATDRLSHYLSRG) lie on the Cytoplasmic side of the membrane. The chain crosses the membrane as a helical span at residues 216-236 (RLLWLTPLISAIGVVALVVLI). At 237-254 (RHPLMPVYIDILRKVVGV) the chain is on the periplasmic side.

This sequence belongs to the DedA family.

It is found in the cell inner membrane. The protein is Inner membrane protein YabI (yabI) of Escherichia coli (strain K12).